The primary structure comprises 547 residues: Chaperonin GroEL (547 aa).

ATP-binding positions include 30–33 (TLGP), Lys-51, 87–91 (DGTTT), Gly-415, and Asp-495.

It belongs to the chaperonin (HSP60) family. As to quaternary structure, forms a cylinder of 14 subunits composed of two heptameric rings stacked back-to-back. Interacts with the co-chaperonin GroES.

Its subcellular location is the cytoplasm. The enzyme catalyses ATP + H2O + a folded polypeptide = ADP + phosphate + an unfolded polypeptide.. Its function is as follows. Together with its co-chaperonin GroES, plays an essential role in assisting protein folding. The GroEL-GroES system forms a nano-cage that allows encapsulation of the non-native substrate proteins and provides a physical environment optimized to promote and accelerate protein folding. The sequence is that of Chaperonin GroEL from Shewanella pealeana (strain ATCC 700345 / ANG-SQ1).